Reading from the N-terminus, the 316-residue chain is 4-diphosphocytidyl-2-C-methyl-D-erythritol kinase (316 aa).

K32 is a catalytic residue. Residue 126-136 (PVGAGLGGGSA) participates in ATP binding. Residue D168 is part of the active site.

This sequence belongs to the GHMP kinase family. IspE subfamily.

It carries out the reaction 4-CDP-2-C-methyl-D-erythritol + ATP = 4-CDP-2-C-methyl-D-erythritol 2-phosphate + ADP + H(+). Its pathway is isoprenoid biosynthesis; isopentenyl diphosphate biosynthesis via DXP pathway; isopentenyl diphosphate from 1-deoxy-D-xylulose 5-phosphate: step 3/6. Functionally, catalyzes the phosphorylation of the position 2 hydroxy group of 4-diphosphocytidyl-2C-methyl-D-erythritol. The chain is 4-diphosphocytidyl-2-C-methyl-D-erythritol kinase from Bifidobacterium longum (strain DJO10A).